We begin with the raw amino-acid sequence, 1520 residues long: Integrator complex subunit 3 homolog (1520 aa).

Disordered stretches follow at residues 1–23, 523–671, 689–801, 813–922, 1116–1177, and 1489–1520; these read MMNQ…QQLT, QLHS…NSRV, VISQ…SPST, DEPP…QNIK, FSNS…NITN, and QSSN…FRKE. 2 stretches are compositionally biased toward low complexity: residues 527–549 and 557–595; these read QQQQ…QQPP and QPIN…QQQP. Pro residues predominate over residues 596–612; that stretch reads PQQPPPQQQPQQQPPQQ. The segment covering 613-625 has biased composition (low complexity); it reads QPQQQPQQQQPQL. Positions 626–639 are enriched in polar residues; the sequence is NISTGNLPNIQQPM. Low complexity-rich tracts occupy residues 642–669, 694–717, and 725–735; these read SPPL…TNNS, PQSQ…SPPL, and QQQPSQQLPSQ. The span at 736–752 shows a compositional bias: polar residues; it reads IVKNSPPNLSMTNENIS. The span at 768–789 shows a compositional bias: low complexity; sequence SPLINSSNSNITTPNPDSQSQI. Residues 819–828 show a composition bias toward polar residues; it reads SKSSPTQSNI. Residues 837–882 are compositionally biased toward low complexity; sequence PPQTTISSSSPLLQPQTQPQPQTQPQPQTLQQSTTPSLSSSSTPTI. Positions 898–918 are enriched in pro residues; that stretch reads QPPPPPPSSQPLQPPPPPPPS. Composition is skewed to low complexity over residues 1116 to 1130 and 1137 to 1177; these read FSNS…NNNN and QQQQ…NITN. Residues 1489–1504 are compositionally biased toward polar residues; the sequence is QSSNIKNDNNPTLSKH.

It belongs to the Integrator subunit 3 family. In terms of assembly, component of the Integrator complex. The core complex associates with protein phosphatase 2A subunits, to form the Integrator-PP2A (INTAC) complex. Component of the SOSS complex.

It localises to the nucleus. It is found in the cytoplasm. Functionally, component of the integrator complex, a multiprotein complex that terminates RNA polymerase II (Pol II) transcription in the promoter-proximal region of genes. The integrator complex provides a quality checkpoint during transcription elongation by driving premature transcription termination of transcripts that are unfavorably configured for transcriptional elongation: the complex terminates transcription by (1) catalyzing dephosphorylation of the C-terminal domain (CTD) of Pol II subunit polr2a, (2) degrading the exiting nascent RNA transcript via endonuclease activity and (3) promoting the release of Pol II from bound DNA. The integrator complex is also involved in terminating the synthesis of non-coding Pol II transcripts, such as enhancer RNAs (eRNAs), small nuclear RNAs (snRNAs), telomerase RNAs and long non-coding RNAs (lncRNAs). Component of the SOSS complex, a multiprotein complex that functions downstream of the MRN complex to promote DNA repair and G2/M checkpoint. The SOSS complex associates with single-stranded DNA at DNA lesions and influences diverse endpoints in the cellular DNA damage response including cell-cycle checkpoint activation, recombinational repair and maintenance of genomic stability. The SOSS complex is required for efficient homologous recombination-dependent repair of double-strand breaks (DSBs) and ATM-dependent signaling pathways. In the SOSS complex, it is required for the assembly of the complex and for stabilization of the complex at DNA damage sites. The polypeptide is Integrator complex subunit 3 homolog (ints3) (Dictyostelium discoideum (Social amoeba)).